The primary structure comprises 324 residues: Phospho-N-acetylmuramoyl-pentapeptide-transferase (324 aa).

Helical transmembrane passes span 9 to 29 (TFAV…PFLV), 54 to 74 (MGAV…SFIG), 77 to 97 (VSAA…LGFL), 117 to 137 (FLGQ…SDFA), 147 to 167 (IEVD…VGFS), 176 to 196 (LDGL…VIAF), 201 to 221 (MDVA…LLFN), 227 to 247 (IFMG…VSIL), 253 to 273 (LLLL…LQVF), and 304 to 324 (VLTF…VVIF).

Belongs to the glycosyltransferase 4 family. MraY subfamily. It depends on Mg(2+) as a cofactor.

It localises to the cell membrane. It catalyses the reaction UDP-N-acetyl-alpha-D-muramoyl-L-alanyl-gamma-D-glutamyl-meso-2,6-diaminopimeloyl-D-alanyl-D-alanine + di-trans,octa-cis-undecaprenyl phosphate = di-trans,octa-cis-undecaprenyl diphospho-N-acetyl-alpha-D-muramoyl-L-alanyl-D-glutamyl-meso-2,6-diaminopimeloyl-D-alanyl-D-alanine + UMP. The protein operates within cell wall biogenesis; peptidoglycan biosynthesis. In terms of biological role, catalyzes the initial step of the lipid cycle reactions in the biosynthesis of the cell wall peptidoglycan: transfers peptidoglycan precursor phospho-MurNAc-pentapeptide from UDP-MurNAc-pentapeptide onto the lipid carrier undecaprenyl phosphate, yielding undecaprenyl-pyrophosphoryl-MurNAc-pentapeptide, known as lipid I. This chain is Phospho-N-acetylmuramoyl-pentapeptide-transferase, found in Listeria welshimeri serovar 6b (strain ATCC 35897 / DSM 20650 / CCUG 15529 / CIP 8149 / NCTC 11857 / SLCC 5334 / V8).